The chain runs to 275 residues: MFSSYRLARHLQKEAQAQHNNSEFTEEQKKTIGKIATCLELRSAALQSTQSQEEFKLEDLKKLEPILKNILTYNKEFPFDVQPVPLRRILAPGEEENLEFEEDEEEGGAGAGSPDSFPARVPGTLLPRLPSEPGMTLLTIRIEKIGLKDAGQCIDPYITVSVKDLNGIDLTPVQDTPVASRKEDTYVHFNVDIELQKHVEKLTKGAAIFFEFKHYKPKKRFTSTKCFAFMEMDEIKPGPIVIELYKKPTDFKRKKLQLLTKKPLYLHLHQTLHKE.

Residues 97–107 (NLEFEEDEEEG) are compositionally biased toward acidic residues. Residues 97-125 (NLEFEEDEEEGGAGAGSPDSFPARVPGTL) are disordered. Serine 113 is subject to Phosphoserine. The axin-binding stretch occupies residues 123–190 (GTLLPRLPSE…RKEDTYVHFN (68 aa)). The C2 Aida-type domain maps to 126–273 (LPRLPSEPGM…LYLHLHQTLH (148 aa)).

It belongs to the AIDA family. In terms of assembly, interacts with AXIN1.

Acts as a ventralizing factor during embryogenesis. Inhibits axin-mediated JNK activation by binding axin and disrupting axin homodimerization. This in turn antagonizes a Wnt/beta-catenin-independent dorsalization pathway activated by AXIN/JNK-signaling. In Macaca fascicularis (Crab-eating macaque), this protein is Axin interactor, dorsalization-associated protein (AIDA).